Here is a 555-residue protein sequence, read N- to C-terminus: Beta-hexosaminidase A (555 aa).

Positions 1–18 (MRLLIPILIFALITTAVT) are cleaved as a signal peptide. The N-linked (GlcNAc...) asparagine glycan is linked to asparagine 47. Glutamate 325 (proton donor) is an active-site residue. N-linked (GlcNAc...) asparagine glycosylation is found at asparagine 351, asparagine 412, and asparagine 460.

This sequence belongs to the glycosyl hydrolase 20 family. Expressed in coelomocytes and neurons of the pharyngeal region and nerve cord.

The protein resides in the lysosome. It carries out the reaction Hydrolysis of terminal non-reducing N-acetyl-D-hexosamine residues in N-acetyl-beta-D-hexosaminides.. Its function is as follows. Responsible for the degradation of GM2 gangliosides, and a variety of other molecules containing terminal N-acetyl hexosamines. Degrades chitotriose. The protein is Beta-hexosaminidase A (hex-1) of Caenorhabditis elegans.